Here is a 561-residue protein sequence, read N- to C-terminus: uncharacterized protein (561 aa).

Positions D187–I217 form a coiled coil.

This is an uncharacterized protein from Dictyostelium discoideum (Social amoeba).